A 587-amino-acid chain; its full sequence is Cyclic di-GMP phosphodiesterase PA2567 (587 aa).

A GAF domain is found at 28-157; that stretch reads DEVFEEILAA…LEHFARLVMA (130 aa). In terms of domain architecture, GGDEF spans 192 to 327; it reads GALTVIAADL…GVGWARYNPP (136 aa). Residues 335–587 form the EAL domain; that stretch reads AFTLLTSLSQ…PEQLEDWLRR (253 aa).

It catalyses the reaction 3',3'-c-di-GMP + H2O = 5'-phosphoguanylyl(3'-&gt;5')guanosine + H(+). Phosphodiesterase (PDE) that catalyzes the hydrolysis of cyclic diguanylate (c-di-GMP) to 5'-pGpG. This chain is Cyclic di-GMP phosphodiesterase PA2567, found in Pseudomonas aeruginosa (strain ATCC 15692 / DSM 22644 / CIP 104116 / JCM 14847 / LMG 12228 / 1C / PRS 101 / PAO1).